The following is a 429-amino-acid chain: Serine hydroxymethyltransferase (429 aa).

(6S)-5,6,7,8-tetrahydrofolate contacts are provided by residues leucine 125 and 129–131 (GHL). Lysine 234 carries the N6-(pyridoxal phosphate)lysine modification.

This sequence belongs to the SHMT family. Homodimer. Pyridoxal 5'-phosphate is required as a cofactor.

The protein localises to the cytoplasm. It carries out the reaction (6R)-5,10-methylene-5,6,7,8-tetrahydrofolate + glycine + H2O = (6S)-5,6,7,8-tetrahydrofolate + L-serine. Its pathway is one-carbon metabolism; tetrahydrofolate interconversion. It functions in the pathway amino-acid biosynthesis; glycine biosynthesis; glycine from L-serine: step 1/1. Functionally, catalyzes the reversible interconversion of serine and glycine with tetrahydrofolate (THF) serving as the one-carbon carrier. This reaction serves as the major source of one-carbon groups required for the biosynthesis of purines, thymidylate, methionine, and other important biomolecules. Also exhibits THF-independent aldolase activity toward beta-hydroxyamino acids, producing glycine and aldehydes, via a retro-aldol mechanism. The protein is Serine hydroxymethyltransferase of Allorhizobium ampelinum (strain ATCC BAA-846 / DSM 112012 / S4) (Agrobacterium vitis (strain S4)).